We begin with the raw amino-acid sequence, 41 residues long: Minor histocompatibility protein HB-1 (41 aa).

Positions E9–V17 are loss of recognition by cytotoxic T lymphocyte (CTL).

In terms of assembly, HB-1 forms a complex with MHC class I HLA-B44. In terms of tissue distribution, expressed in acute lymphoblastic leukemia B-cells and Epstein-Barr virus-transformed B-cells.

Precursor of the histocomplatibility antigen HB-1. More generally, minor histocomplatibility antigens (mHags) refer to immunogenic peptide which, when complexed with MHC, can generate an immune response after recognition by specific T-cells. The peptides are derived from polymorphic intracellular proteins, which are cleaved by normal pathways of antigen processing. The binding of these peptides to MHC class I or class II molecules and its expression on the cell surface can stimulate T-cell responses and thereby trigger graft rejection or graft-versus-host disease (GVHD) after hematopoietic stem cell transplantation from HLA-identical sibling donor. GVHD is a frequent complication after bone marrow transplantation (BMT), due to mismatch of minor histocomplatibility antigen in HLA-matched sibling marrow transplants. HB-1 is presented on the cell surface by MHC class I HLA-B44. This complex specifically elicits donor-cytotoxic T lymphocyte (CTL) reactivity in B-cell acute lymphoblastic leukemia (B-ALL) after treatment by HLA-identical allogenic bone marrow transplantation (BMT). It induces cell recognition and lysis by CTL. However, HB-1 restricted expression in B-ALL cells and not in normal tissues may allow a specific CTL reactivity against B-ALL without the risk of evoking graft-versus-host disease. The chain is Minor histocompatibility protein HB-1 (HMHB1) from Homo sapiens (Human).